The primary structure comprises 245 residues: Small ribosomal subunit protein uS3 (245 aa).

The KH type-2 domain occupies 21–92; it reads LNEFLTRELA…SVELYAEKVA (72 aa). The tract at residues 215–245 is disordered; that stretch reads EEILPTTPVSEQKGAKPEVPVMPQGAPVPTA.

This sequence belongs to the universal ribosomal protein uS3 family.

Its subcellular location is the cytoplasm. It is found in the nucleus. The protein localises to the nucleolus. The protein resides in the mitochondrion inner membrane. It localises to the cytoskeleton. Its subcellular location is the spindle. The enzyme catalyses 2'-deoxyribonucleotide-(2'-deoxyribose 5'-phosphate)-2'-deoxyribonucleotide-DNA = a 3'-end 2'-deoxyribonucleotide-(2,3-dehydro-2,3-deoxyribose 5'-phosphate)-DNA + a 5'-end 5'-phospho-2'-deoxyribonucleoside-DNA + H(+). Its function is as follows. Component of the small ribosomal subunit. The ribosome is a large ribonucleoprotein complex responsible for the synthesis of proteins in the cell. Has endonuclease activity and plays a role in repair of damaged DNA. Also involved in other processes including regulation of transcription, translation of its cognate mRNA, spindle formation and chromosome movement during mitosis, and apoptosis. The protein is Small ribosomal subunit protein uS3 (rps3) of Ictalurus punctatus (Channel catfish).